Consider the following 454-residue polypeptide: Bifunctional protein GlmU (454 aa).

The tract at residues Met1–Arg231 is pyrophosphorylase. UDP-N-acetyl-alpha-D-glucosamine-binding positions include Leu11 to Gly14, Lys25, Gln78, Gly83 to Thr84, Tyr106 to Asp108, Gly143, Glu157, Asn172, and Asn229. Asp108 lines the Mg(2+) pocket. Asn229 provides a ligand contact to Mg(2+). Residues Ala232 to Asp252 form a linker region. The tract at residues Gly253 to Pro454 is N-acetyltransferase. Residues Arg318 and Lys336 each contribute to the UDP-N-acetyl-alpha-D-glucosamine site. Residue His348 is the Proton acceptor of the active site. UDP-N-acetyl-alpha-D-glucosamine-binding residues include Tyr351 and Asn362. Acetyl-CoA is bound by residues Ala365, Asn371–Tyr372, Ser390, Ser408, and Arg425.

This sequence in the N-terminal section; belongs to the N-acetylglucosamine-1-phosphate uridyltransferase family. It in the C-terminal section; belongs to the transferase hexapeptide repeat family. As to quaternary structure, homotrimer. Requires Mg(2+) as cofactor.

It is found in the cytoplasm. The enzyme catalyses alpha-D-glucosamine 1-phosphate + acetyl-CoA = N-acetyl-alpha-D-glucosamine 1-phosphate + CoA + H(+). It catalyses the reaction N-acetyl-alpha-D-glucosamine 1-phosphate + UTP + H(+) = UDP-N-acetyl-alpha-D-glucosamine + diphosphate. It participates in nucleotide-sugar biosynthesis; UDP-N-acetyl-alpha-D-glucosamine biosynthesis; N-acetyl-alpha-D-glucosamine 1-phosphate from alpha-D-glucosamine 6-phosphate (route II): step 2/2. The protein operates within nucleotide-sugar biosynthesis; UDP-N-acetyl-alpha-D-glucosamine biosynthesis; UDP-N-acetyl-alpha-D-glucosamine from N-acetyl-alpha-D-glucosamine 1-phosphate: step 1/1. It functions in the pathway bacterial outer membrane biogenesis; LPS lipid A biosynthesis. Catalyzes the last two sequential reactions in the de novo biosynthetic pathway for UDP-N-acetylglucosamine (UDP-GlcNAc). The C-terminal domain catalyzes the transfer of acetyl group from acetyl coenzyme A to glucosamine-1-phosphate (GlcN-1-P) to produce N-acetylglucosamine-1-phosphate (GlcNAc-1-P), which is converted into UDP-GlcNAc by the transfer of uridine 5-monophosphate (from uridine 5-triphosphate), a reaction catalyzed by the N-terminal domain. The protein is Bifunctional protein GlmU of Cereibacter sphaeroides (strain ATCC 17023 / DSM 158 / JCM 6121 / CCUG 31486 / LMG 2827 / NBRC 12203 / NCIMB 8253 / ATH 2.4.1.) (Rhodobacter sphaeroides).